The sequence spans 360 residues: Phenylalanine--tRNA ligase alpha subunit (360 aa).

Glu-260 contributes to the Mg(2+) binding site.

This sequence belongs to the class-II aminoacyl-tRNA synthetase family. Phe-tRNA synthetase alpha subunit type 1 subfamily. Tetramer of two alpha and two beta subunits. The cofactor is Mg(2+).

Its subcellular location is the cytoplasm. It carries out the reaction tRNA(Phe) + L-phenylalanine + ATP = L-phenylalanyl-tRNA(Phe) + AMP + diphosphate + H(+). This Sinorhizobium fredii (strain NBRC 101917 / NGR234) protein is Phenylalanine--tRNA ligase alpha subunit.